The sequence spans 823 residues: Protein FAM193B (823 aa).

Disordered stretches follow at residues 1-78 (MTRR…TSQS), 158-191 (SCKS…NSGD), 209-281 (SPHS…PTTP), and 381-409 (CEAD…HQRD). The span at 26-36 (PQAPEPPPPPS) shows a compositional bias: pro residues. The segment covering 52–64 (PYRDDPREEDEPK) has biased composition (basic and acidic residues). Composition is skewed to low complexity over residues 168–184 (SHSS…SSSS) and 263–281 (SHPG…PTTP). Acidic residues predominate over residues 382–393 (EADEGLGEEEDS). A coiled-coil region spans residues 422-484 (GHNAEKEKAQ…RLQEIKNTVK (63 aa)). 2 disordered regions span residues 503 to 583 (FSKE…PENG) and 599 to 775 (WVKT…PKDM). Composition is skewed to polar residues over residues 516–526 (LAPSNPSGSSE) and 641–657 (QGNQ…SQSP). Phosphoserine is present on residues Ser694, Ser706, and Ser813.

This sequence belongs to the FAM193 family.

It is found in the cytoplasm. The protein resides in the nucleus. This Bos taurus (Bovine) protein is Protein FAM193B (FAM193B).